The primary structure comprises 301 residues: MTQTRARTVFLLAHTGRPAAIRSAELVVQGLLRSGLGVRVLEAEAADLPLPDEVELVKEATPQCLDGCELLIVLGGDGTLLRGAEFARASGVPMLGVNLGRVGFLAEAERDDLDKVVDRVVTKAYEVEERMTVDVVVHKNGDIVHTDWALNEAAVQKVSAERLLEVVLEIDGRPVTGFGCDGIVCATPTGSTAYAFSAGGPVVWPEVEALLMVPISAHALFAKPLVTSPNSVLAVEVQPDTPHGVLWCDGRRTVELPQGARVEVRRGAVPVRLARLHHASFTDRLVAKFALPVAGWRGAPH.

Asp-77 functions as the Proton acceptor in the catalytic mechanism. NAD(+)-binding positions include Asp-77–Gly-78, Arg-82, Asn-151–Glu-152, Arg-162, Asp-181, and Thr-192–Ser-197.

The protein belongs to the NAD kinase family. A divalent metal cation is required as a cofactor.

The protein resides in the cytoplasm. The catalysed reaction is NAD(+) + ATP = ADP + NADP(+) + H(+). Involved in the regulation of the intracellular balance of NAD and NADP, and is a key enzyme in the biosynthesis of NADP. Catalyzes specifically the phosphorylation on 2'-hydroxyl of the adenosine moiety of NAD to yield NADP. This is NAD kinase 2 from Streptomyces avermitilis (strain ATCC 31267 / DSM 46492 / JCM 5070 / NBRC 14893 / NCIMB 12804 / NRRL 8165 / MA-4680).